We begin with the raw amino-acid sequence, 247 residues long: Mannose-P-dolichol utilization defect 1 protein (247 aa).

Alanine 2 carries the post-translational modification N-acetylalanine. 7 helical membrane-spanning segments follow: residues 37 to 57 (CLKI…SLLV), 74 to 94 (LSLQ…VYSI), 100 to 120 (FSSW…CFLV), 128 to 145 (VKGV…LVLL), 151 to 171 (LTVV…GRLL), 185 to 205 (LSAI…FTSI), and 213 to 233 (MAGT…QLLF). The PQ-loop 1 domain maps to 39-105 (KILLSKGLGL…NNFPFSSWGE (67 aa)). In terms of domain architecture, PQ-loop 2 spans 159-216 (ASNVPAVVVGRLLQAATNYHNGHTGQLSAITVFLLFGGSLARIFTSIQETGDPLMAGT).

The protein belongs to the MPDU1 (TC 2.A.43.3) family.

The protein localises to the membrane. In terms of biological role, required for normal utilization of mannose-dolichol phosphate (Dol-P-Man) in the synthesis of N-linked and O-linked oligosaccharides and GPI anchors. In Homo sapiens (Human), this protein is Mannose-P-dolichol utilization defect 1 protein (MPDU1).